We begin with the raw amino-acid sequence, 259 residues long: Flagellar L-ring protein (259 aa).

The signal sequence occupies residues 1-15 (MKRISLIALVTLMSG). Cysteine 16 carries N-palmitoyl cysteine lipidation. Cysteine 16 carries the S-diacylglycerol cysteine lipid modification.

It belongs to the FlgH family. In terms of assembly, the basal body constitutes a major portion of the flagellar organelle and consists of four rings (L,P,S, and M) mounted on a central rod.

Its subcellular location is the cell outer membrane. It is found in the bacterial flagellum basal body. In terms of biological role, assembles around the rod to form the L-ring and probably protects the motor/basal body from shearing forces during rotation. The chain is Flagellar L-ring protein from Vibrio vulnificus (strain YJ016).